We begin with the raw amino-acid sequence, 376 residues long: Pyruvate dehydrogenase E1 component subunit beta-2, mitochondrial (376 aa).

The transit peptide at 1–36 directs the protein to the mitochondrion; that stretch reads MLGAARRQLGSGPMLGQVLRRLRPATAAAADAARAY. Glu-99 lines the thiamine diphosphate pocket. 4 residues coordinate K(+): Ile-152, Ala-200, Ile-201, and Asp-203.

In terms of assembly, tetramer of 2 alpha and 2 beta subunits. Requires thiamine diphosphate as cofactor.

The protein localises to the mitochondrion matrix. It carries out the reaction N(6)-[(R)-lipoyl]-L-lysyl-[protein] + pyruvate + H(+) = N(6)-[(R)-S(8)-acetyldihydrolipoyl]-L-lysyl-[protein] + CO2. Its function is as follows. The pyruvate dehydrogenase complex catalyzes the overall conversion of pyruvate to acetyl-CoA and CO(2). It contains multiple copies of three enzymatic components: pyruvate dehydrogenase (E1), dihydrolipoamide acetyltransferase (E2) and lipoamide dehydrogenase (E3). The sequence is that of Pyruvate dehydrogenase E1 component subunit beta-2, mitochondrial from Oryza sativa subsp. japonica (Rice).